We begin with the raw amino-acid sequence, 361 residues long: Putative F-box protein At3g19560 (361 aa).

Residues Met3–Tyr49 enclose the F-box domain.

In Arabidopsis thaliana (Mouse-ear cress), this protein is Putative F-box protein At3g19560.